A 107-amino-acid chain; its full sequence is Large ribosomal subunit protein uL24 (107 aa).

Belongs to the universal ribosomal protein uL24 family. Part of the 50S ribosomal subunit.

One of two assembly initiator proteins, it binds directly to the 5'-end of the 23S rRNA, where it nucleates assembly of the 50S subunit. Its function is as follows. One of the proteins that surrounds the polypeptide exit tunnel on the outside of the subunit. The polypeptide is Large ribosomal subunit protein uL24 (Kosmotoga olearia (strain ATCC BAA-1733 / DSM 21960 / TBF 19.5.1)).